Here is a 423-residue protein sequence, read N- to C-terminus: uncharacterized protein (423 aa).

This is an uncharacterized protein from Ictaluridae (bullhead catfishes).